Reading from the N-terminus, the 633-residue chain is CDK5 and ABL1 enzyme substrate 1 (633 aa).

The span at methionine 1 to glutamine 29 shows a compositional bias: low complexity. The interval methionine 1–glycine 99 is disordered. Residues methionine 1–serine 109 form an interaction with TDRD7 region. A compositionally biased stretch (basic and acidic residues) spans proline 51–arginine 61. A phosphoserine mark is found at serine 168 and serine 287. Residues glutamine 179–serine 492 are interaction with CDK3. At serine 313 the chain carries Phosphoserine; by CDK2 and CDK3. Threonine 415 bears the Phosphothreonine mark.

Belongs to the cyclin family. In terms of assembly, found in a complex with p53/TP53. Found in a number of complexes with CDK2, CDK3, CDK5, ABL1, TDRD7, CDK17, CCNA1, CCNE1 and TP73. Interacts with CDK2, CDK3, CDK5, ABL1 and TDRD7. In terms of processing, phosphorylated on Ser-313 by CCNE1/CDK3. Phosphorylated on serine/threonine residues by CDK5 and on tyrosine residues by ABL1. Also phosphorylated in vitro by CCNA1/CDK2, CCNE1/CDK2, CCNA1/CDK3 and CCNE1/CDK3. Expressed in breast, pancreas, colon, head and neck (at protein level). Strongly decreased in more than half of cases of atypical endometrial hyperplasia and in more than 90% of endometrial cancers.

The protein localises to the nucleus. Its subcellular location is the cytoplasm. Cyclin-dependent kinase binding protein. Enhances cyclin-dependent kinase tyrosine phosphorylation by nonreceptor tyrosine kinases, such as that of CDK5 by activated ABL1, which leads to increased CDK5 activity and is critical for neuronal development, and that of CDK2 by WEE1, which leads to decreased CDK2 activity and growth inhibition. Positively affects neuronal outgrowth. Plays a role as a regulator for p53/p73-induced cell death. The chain is CDK5 and ABL1 enzyme substrate 1 (CABLES1) from Homo sapiens (Human).